We begin with the raw amino-acid sequence, 273 residues long: DnaJ homolog subfamily C member 27-A (273 aa).

GTP-binding positions include 23-30 (GNAEVGKS), 71-75 (DMAGH), and 134-137 (NKID). The J domain maps to 217-273 (DSWDMLGVKPGATRDEVNKAYRKLAVLLHPDKCMAPGSEDAFKAVVNARTALLKNIK).

Belongs to the small GTPase superfamily. Rab family.

It localises to the nucleus. GTPase possibly involved in regulation of the MEK/ERK pathway. In Xenopus laevis (African clawed frog), this protein is DnaJ homolog subfamily C member 27-A (dnajc27-a).